The primary structure comprises 440 residues: Xylose isomerase (440 aa).

Residues H100 and D103 contribute to the active site. 7 residues coordinate Mg(2+): E231, E267, H270, D295, D306, D308, and D338.

Belongs to the xylose isomerase family. As to quaternary structure, homotetramer. Mg(2+) serves as cofactor.

The protein localises to the cytoplasm. It carries out the reaction alpha-D-xylose = alpha-D-xylulofuranose. The chain is Xylose isomerase from Burkholderia thailandensis (strain ATCC 700388 / DSM 13276 / CCUG 48851 / CIP 106301 / E264).